The chain runs to 296 residues: Galectin-3 (296 aa).

Positions 1 to 11 (MADSFSLNDAL) are enriched in polar residues. Residues 1–150 (MADSFSLNDA…PSAPGAYPAA (150 aa)) are disordered. Position 2 is an N-acetylalanine (Ala2). Phosphoserine; by CK1 occurs at positions 6 and 12. Composition is skewed to low complexity over residues 12–31 (SGSG…NQPA) and 38–47 (GASYPGAYPG). 8 consecutive repeat copies span residues 36 to 44 (YPGASYPGA), 45 to 53 (YPGQAPPGG), 54 to 62 (YPGQAPPGG), 63 to 71 (YPGQAPPGG), 72 to 80 (YPGQAPPGG), 81 to 89 (YPGQAPPGG), 90 to 98 (YPGQAPPGG), and 99 to 107 (YPGQAPPGT). The segment at 36-143 (YPGASYPGAY…AYPPPGQPSA (108 aa)) is 12 X 9 AA tandem repeats of Y-P-G-X(3)-P-G-[GAT]. Over residues 48 to 120 (QAPPGGYPGQ…PTAPAYPGPT (73 aa)) the composition is skewed to pro residues. One copy of the 9; approximate repeat lies at 108–115 (YPGPTAPA). Repeat unit 10 spans residues 116–124 (YPGPTAPGT). The segment covering 121–133 (APGTQPGQPSGPG) has biased composition (low complexity). The 11; approximate repeat unit spans residues 125 to 134 (QPGQPSGPGA). A 12; approximate repeat occupies 135 to 143 (YPPPGQPSA). In terms of domain architecture, Galectin spans 164-294 (YDLPLPGGVK…DIDLTSASYA (131 aa)). 227–233 (WGKEERQ) contacts a beta-D-galactoside. Residues 272-287 (KNLPEISKLGISGDID) carry the Nuclear export signal motif.

In terms of assembly, probably forms homo- or heterodimers. Interacts with DMBT1. Interacts with CD6 and ALCAM. Forms a complex with the ITGA3, ITGB1 and CSPG4. Interacts with LGALS3BP, LYPD3, ZFTRAF1 and UACA. Interacts with TRIM16; this interaction mediates autophagy of damage endomembranes. Interacts with cargo receptor TMED10; the interaction mediates the translocation from the cytoplasm into the ERGIC (endoplasmic reticulum-Golgi intermediate compartment) and thereby secretion. Interacts with and inhibits by binding NCR3/NKp30. In terms of processing, the degree of phosphorylation is higher in the cytoplasmic form than in the nuclear form. In protein isolated from a canine kidney cell line, 90% of the phosphate was on Ser-6 and 10% was on Ser-12.

It localises to the cytoplasm. It is found in the nucleus. The protein localises to the secreted. Its function is as follows. Galactose-specific lectin which binds IgE. May mediate with the alpha-3, beta-1 integrin the stimulation by CSPG4 of endothelial cells migration. Together with DMBT1, required for terminal differentiation of columnar epithelial cells during early embryogenesis. In the nucleus: acts as a pre-mRNA splicing factor. Involved in acute inflammatory responses including neutrophil activation and adhesion, chemoattraction of monocytes macrophages, opsonization of apoptotic neutrophils, and activation of mast cells. Together with TRIM16, coordinates the recognition of membrane damage with mobilization of the core autophagy regulators ATG16L1 and BECN1 in response to damaged endomembranes. When secreted, interacts with NK cell-activating receptor NCR3/NKp30 acting as an inhibitory ligand which antagonizes NK cell attack. This chain is Galectin-3 (LGALS3), found in Canis lupus familiaris (Dog).